The following is a 408-amino-acid chain: uncharacterized protein (408 aa).

Residues 49-77 are disordered; it reads PRSSPEVQRKATAGENSEVGSPESSLSTS. Positions 62–77 are enriched in polar residues; it reads GENSEVGSPESSLSTS. The region spanning 124 to 170 is the F-box domain; the sequence is SFEFMQLPDTDICQIMSFLDAQSLLNLSQTCSHLRQLCLAHEDNAGK.

This is an uncharacterized protein from Caenorhabditis elegans.